The primary structure comprises 116 residues: Carbohydrate-binding protein AQN-3 (116 aa).

Cys9 and Cys30 form a disulfide bridge. In terms of domain architecture, CUB spans 9–110 (CGGFLKNYSG…SSFNVYFYGI (102 aa)). An N-linked (GlcNAc...) asparagine glycan is attached at Asn50. A disulfide bridge connects residues Cys53 and Cys74. A Methylhistidine modification is found at His85.

Belongs to the spermadhesin family. The residue at position 85 was identified as a methylhistidine by mass spectrometry.

Its subcellular location is the secreted. In terms of biological role, AQN proteins mediate the binding of boar spermatozoa to component(s) of the egg's zona pellucida by a carbohydrate-binding mechanism. AQN proteins are secretory components of the male accessory glands being coated to the sperm surface at the time of ejaculation. They possess as well heparin-, serine-protease-inhibitor-binding capability. This chain is Carbohydrate-binding protein AQN-3, found in Sus scrofa (Pig).